The chain runs to 209 residues: Uracil phosphoribosyltransferase (209 aa).

Residues Arg-79, Arg-104, and 131–139 (DPMLATGGS) contribute to the 5-phospho-alpha-D-ribose 1-diphosphate site. Uracil contacts are provided by residues Ile-194 and 199 to 201 (GDA). Asp-200 provides a ligand contact to 5-phospho-alpha-D-ribose 1-diphosphate.

This sequence belongs to the UPRTase family. Mg(2+) serves as cofactor.

The enzyme catalyses UMP + diphosphate = 5-phospho-alpha-D-ribose 1-diphosphate + uracil. Its pathway is pyrimidine metabolism; UMP biosynthesis via salvage pathway; UMP from uracil: step 1/1. Allosterically activated by GTP. Functionally, catalyzes the conversion of uracil and 5-phospho-alpha-D-ribose 1-diphosphate (PRPP) to UMP and diphosphate. The protein is Uracil phosphoribosyltransferase of Listeria monocytogenes serovar 1/2a (strain ATCC BAA-679 / EGD-e).